The following is a 225-amino-acid chain: MMYHIPGVLSPQDVARFREQLEQAEWVDGRVTTGAQGAQVKNNQQVDTRSTLYAALQNEVLNAVNQHALFFAAALPRTLSTPLFNRYQNNETYGFHVDGAVRSHPQNGWMRTDLSATLFLSDPQSYDGGELVVNDTFGQHRVKLPAGDLVLYPSSSLHCVTPVTRGVRVASFMWIQSMIRDDKKRAMLFELDNNIQSLKSRYGESEEILSLLNLYHNLLREWSEI.

The Fe2OG dioxygenase domain maps to 78–177 (TLSTPLFNRY…RVASFMWIQS (100 aa)). Fe cation-binding residues include His-96, Asp-98, and His-158. Residue Arg-168 coordinates 2-oxoglutarate.

The cofactor is Fe(2+). L-ascorbate serves as cofactor.

This Escherichia coli (strain K12 / DH10B) protein is PKHD-type hydroxylase YbiX.